A 116-amino-acid chain; its full sequence is Putative pterin-4-alpha-carbinolamine dehydratase 1 (116 aa).

Belongs to the pterin-4-alpha-carbinolamine dehydratase family.

The catalysed reaction is (4aS,6R)-4a-hydroxy-L-erythro-5,6,7,8-tetrahydrobiopterin = (6R)-L-erythro-6,7-dihydrobiopterin + H2O. The sequence is that of Putative pterin-4-alpha-carbinolamine dehydratase 1 from Cupriavidus pinatubonensis (strain JMP 134 / LMG 1197) (Cupriavidus necator (strain JMP 134)).